The primary structure comprises 534 residues: Probable protein kinase UbiB (534 aa).

A helical membrane pass occupies residues 23–43 (DLLFALPLPWFLLAVRYVLPW). In terms of domain architecture, Protein kinase spans 125–492 (RFDVDPLASA…WKKRKDDWFL (368 aa)). Residues 131 to 139 (LASASVAQV) and Lys-153 each bind ATP. Residue Asp-288 is the Proton acceptor of the active site. 2 helical membrane passes run 490–510 (WFLR…AIGG) and 512–532 (LNQL…YLIV).

It belongs to the ABC1 family. UbiB subfamily.

Its subcellular location is the cell inner membrane. It participates in cofactor biosynthesis; ubiquinone biosynthesis [regulation]. Is probably a protein kinase regulator of UbiI activity which is involved in aerobic coenzyme Q (ubiquinone) biosynthesis. The protein is Probable protein kinase UbiB of Pseudomonas fluorescens (strain SBW25).